Consider the following 201-residue polypeptide: Peptidyl-tRNA hydrolase (201 aa).

Y14 contacts tRNA. H19 acts as the Proton acceptor in catalysis. 3 residues coordinate tRNA: Y64, N66, and N112.

This sequence belongs to the PTH family. As to quaternary structure, monomer.

It is found in the cytoplasm. The catalysed reaction is an N-acyl-L-alpha-aminoacyl-tRNA + H2O = an N-acyl-L-amino acid + a tRNA + H(+). Hydrolyzes ribosome-free peptidyl-tRNAs (with 1 or more amino acids incorporated), which drop off the ribosome during protein synthesis, or as a result of ribosome stalling. Functionally, catalyzes the release of premature peptidyl moieties from peptidyl-tRNA molecules trapped in stalled 50S ribosomal subunits, and thus maintains levels of free tRNAs and 50S ribosomes. In Afipia carboxidovorans (strain ATCC 49405 / DSM 1227 / KCTC 32145 / OM5) (Oligotropha carboxidovorans), this protein is Peptidyl-tRNA hydrolase.